The sequence spans 147 residues: Ribonuclease 4 (147 aa).

Residues M1–G28 form the signal peptide. A Pyrrolidone carboxylic acid modification is found at Q29. DUMP-binding residues include R35, H40, K68, N71, and T72. The active-site Proton acceptor is H40. Intrachain disulfides connect C53-C109, C67-C120, C85-C135, and C92-C99. The active-site Proton donor is the H144. F145 contacts dUMP.

This sequence belongs to the pancreatic ribonuclease family.

It localises to the secreted. Functionally, cleaves preferentially after uridine bases. Has antimicrobial activity against uropathogenic E.coli (UPEC). Probably contributes to urinary tract sterility. This Pan troglodytes (Chimpanzee) protein is Ribonuclease 4 (RNASE4).